The following is an 83-amino-acid chain: U25-theraphotoxin-Cg1a (83 aa).

Residues 1–23 (MRFHTLLFLSFLLLVSCALICTA) form the signal peptide. Positions 24–48 (QHPGLKKSGMFHENVGKGQHIEKKR) are excised as a propeptide. 3 cysteine pairs are disulfide-bonded: C50–C66, C57–C71, and C65–C81.

This sequence belongs to the neurotoxin 07 (Beta/delta-agtx) family. 03 (aga-4) subfamily. JZTX sub-subfamily. In terms of tissue distribution, expressed by the venom gland.

Its subcellular location is the secreted. In terms of biological role, inhibits TTX-sensitive sodium currents in rat dorsal root ganglion (DRG) neurons. The chain is U25-theraphotoxin-Cg1a from Chilobrachys guangxiensis (Chinese earth tiger tarantula).